Consider the following 170-residue polypeptide: ATP synthase subunit b (170 aa).

A helical membrane pass occupies residues 22-44 (IINLAVVVFGLYKFLPGFLGKIL).

It belongs to the ATPase B chain family. As to quaternary structure, F-type ATPases have 2 components, F(1) - the catalytic core - and F(0) - the membrane proton channel. F(1) has five subunits: alpha(3), beta(3), gamma(1), delta(1), epsilon(1). F(0) has four main subunits: a(1), b(1), b'(1) and c(10-14). The alpha and beta chains form an alternating ring which encloses part of the gamma chain. F(1) is attached to F(0) by a central stalk formed by the gamma and epsilon chains, while a peripheral stalk is formed by the delta, b and b' chains.

It localises to the cellular thylakoid membrane. Functionally, f(1)F(0) ATP synthase produces ATP from ADP in the presence of a proton or sodium gradient. F-type ATPases consist of two structural domains, F(1) containing the extramembraneous catalytic core and F(0) containing the membrane proton channel, linked together by a central stalk and a peripheral stalk. During catalysis, ATP synthesis in the catalytic domain of F(1) is coupled via a rotary mechanism of the central stalk subunits to proton translocation. Its function is as follows. Component of the F(0) channel, it forms part of the peripheral stalk, linking F(1) to F(0). This Prochlorococcus marinus (strain NATL1A) protein is ATP synthase subunit b.